Reading from the N-terminus, the 296-residue chain is uncharacterized protein (296 aa).

A signal peptide spans 1-20; sequence MKKLLLIIITVFFAFNVAQA.

This is an uncharacterized protein from Rickettsia felis (strain ATCC VR-1525 / URRWXCal2) (Rickettsia azadi).